Consider the following 347-residue polypeptide: L-threonine 3-dehydrogenase (347 aa).

Residue C42 coordinates Zn(2+). Residues T44 and H47 each act as charge relay system in the active site. Zn(2+) is bound by residues H67, E68, C97, C100, C103, and C111. Residues I179, E199, R204, 266–268, and 291–292 each bind NAD(+); these read LGL and IT.

It belongs to the zinc-containing alcohol dehydrogenase family. Homotetramer. Zn(2+) serves as cofactor.

Its subcellular location is the cytoplasm. It catalyses the reaction L-threonine + NAD(+) = (2S)-2-amino-3-oxobutanoate + NADH + H(+). It participates in amino-acid degradation; L-threonine degradation via oxydo-reductase pathway; glycine from L-threonine: step 1/2. Catalyzes the NAD(+)-dependent oxidation of L-threonine to 2-amino-3-ketobutyrate. This chain is L-threonine 3-dehydrogenase, found in Caldanaerobacter subterraneus subsp. tengcongensis (strain DSM 15242 / JCM 11007 / NBRC 100824 / MB4) (Thermoanaerobacter tengcongensis).